A 469-amino-acid chain; its full sequence is Probable periplasmic serine endoprotease DegP-like (469 aa).

The signal sequence occupies residues 1–25 (MNRLLKQVCMVVVSSFMMASMLTHA). Catalysis depends on charge relay system residues His-114, Asp-144, and Ser-217. Residues 215–217 (GNS) and 272–276 (LGVLI) each bind substrate. PDZ domains are found at residues 261-352 (LKSD…YRDG) and 358-458 (SVTL…IRQG).

It belongs to the peptidase S1C family.

It localises to the periplasm. The enzyme catalyses Acts on substrates that are at least partially unfolded. The cleavage site P1 residue is normally between a pair of hydrophobic residues, such as Val-|-Val.. In terms of biological role, might be efficient in the degradation of transiently denatured and unfolded proteins which accumulate in the periplasm following stress conditions. This Marinomonas sp. (strain MWYL1) protein is Probable periplasmic serine endoprotease DegP-like.